Here is a 375-residue protein sequence, read N- to C-terminus: Platelet-derived growth factor receptor-like protein (375 aa).

The signal sequence occupies residues 1 to 21 (MKVWLLLGLLLVHEALEDVTG). Positions 22 to 64 (QHLPKNKRPKEPGENRIKPTNKKVKPKIPKIKDRDSADSTPKT) are disordered. Positions 40–50 (PTNKKVKPKIP) are enriched in basic residues. In terms of domain architecture, Ig-like C2-type 1 spans 62–159 (PKTQSIMMQV…GYICRKDETK (98 aa)). A disulfide bridge connects residues cysteine 96 and cysteine 143. N-linked (GlcNAc...) asparagine glycosylation is found at asparagine 132 and asparagine 219. In terms of domain architecture, Ig-like C2-type 2 spans 272–375 (PSTTILASSN…TTVATTVEFS (104 aa)). A disulfide bond links cysteine 293 and cysteine 357.

As to quaternary structure, forms a complex composed of PDGFRL, TNK2 and GRB2.

Its subcellular location is the secreted. This Macaca fascicularis (Crab-eating macaque) protein is Platelet-derived growth factor receptor-like protein (PDGFRL).